The primary structure comprises 354 residues: Long form salivary protein D7L3 (354 aa).

Positions 1 to 26 (MQLTPRSVHLVHLLLAATTLISPSWS) are cleaved as a signal peptide.

Belongs to the PBP/GOBP family.

The protein localises to the secreted. Functionally, modulates blood feeding of female mosquitoes on vertebrate species by binding and sequestering different mediators involved in the host response. Binds serotonin with high affinity. Binds weakly noradrenaline and histamine. Does not bind tryptamine, octopamine, dopamine, adrenaline, leukotriene C4, leukotriene D4, leukotriene B4, ADP and U-46619, a stable analog of thromboxane A2. Inhibits agonist-induced platelet aggregation. Exhibits vasodilating activity. The chain is Long form salivary protein D7L3 from Anopheles gambiae (African malaria mosquito).